The primary structure comprises 450 residues: 23S rRNA (uracil(1939)-C(5))-methyltransferase RlmD (450 aa).

The TRAM domain maps to 12–70 (SKQLSAKLSLSVNQLDHLGAGIAQHQGKVVFIPGALPDETVTVQLTEQKKNYARAKLIK). [4Fe-4S] cluster contacts are provided by Cys-83, Cys-89, Cys-92, and Cys-171. S-adenosyl-L-methionine contacts are provided by Gln-283, Phe-312, Asn-317, Glu-333, Asp-360, and Asp-380. Residue Cys-406 is the Nucleophile of the active site.

Belongs to the class I-like SAM-binding methyltransferase superfamily. RNA M5U methyltransferase family. RlmD subfamily.

It carries out the reaction uridine(1939) in 23S rRNA + S-adenosyl-L-methionine = 5-methyluridine(1939) in 23S rRNA + S-adenosyl-L-homocysteine + H(+). Its function is as follows. Catalyzes the formation of 5-methyl-uridine at position 1939 (m5U1939) in 23S rRNA. In Shewanella baltica (strain OS223), this protein is 23S rRNA (uracil(1939)-C(5))-methyltransferase RlmD.